The following is a 319-amino-acid chain: Free fatty acid receptor 3 (319 aa).

Over 1 to 15 (MDTSFFPGNHWLFFS) the chain is Extracellular. Residues 16 to 36 (VDLLVFLVGLPLNVMALVVFV) form a helical membrane-spanning segment. Over 37 to 43 (NKLRRRP) the chain is Cytoplasmic. A helical membrane pass occupies residues 44-64 (VAVDLLLLNLTISDLLLLLFL). Residues 65–98 (PFRIVEAACGMKWILPFIFCPLSGFLFFTTIYLT) lie on the Extracellular side of the membrane. A disulfide bridge links Cys-84 with Cys-165. Residues 99–119 (SLFLMTVSIERFLSVAYPLWY) traverse the membrane as a helical segment. Topologically, residues 120–127 (KTRPRLAQ) are cytoplasmic. The chain crosses the membrane as a helical span at residues 128 to 148 (AGLVSGICWFLASAHCSVIYV). Over 149-183 (TEYWGNATYSQGTNGTCYLEFREDQLAILLPVRLE) the chain is Extracellular. A helical transmembrane segment spans residues 184–206 (MAVVLFMVPLCITSYCYSRLVWI). Topologically, residues 207–218 (LSQGASRRRRKR) are cytoplasmic. Residues 219-239 (VMGLLVATLLIFFVCFGPYNM) form a helical membrane-spanning segment. Over 240 to 254 (SHVVGYVRGESPTWR) the chain is Extracellular. Residues 255–275 (SYVLLLSTLNSCIDPLVFYFS) traverse the membrane as a helical segment. The Cytoplasmic segment spans residues 276–319 (SSKFQADFHQLLSRLIRACVPWTQEVSLELKVKNGEEPSKECPS).

It belongs to the G-protein coupled receptor 1 family. As to expression, expressed in the sympathetic nervous system.

The protein resides in the cell membrane. Functionally, g protein-coupled receptor that is activated by a major product of dietary fiber digestion, the short chain fatty acids (SCFAs), and that plays a role in the regulation of whole-body energy homeostasis and in intestinal immunity. In omnivorous mammals, the short chain fatty acids acetate, propionate and butyrate are produced primarily by the gut microbiome that metabolizes dietary fibers. SCFAs serve as a source of energy but also act as signaling molecules. That G protein-coupled receptor is probably coupled to the pertussis toxin-sensitive, G(i/o)-alpha family of G proteins. Its activation results in the formation of inositol 1,4,5-trisphosphate, the mobilization of intracellular calcium, the phosphorylation of the MAPK3/ERK1 and MAPK1/ERK2 kinases and the inhibition of intracellular cAMP accumulation. Activated by SCFAs and by beta-hydroxybutyrate, a ketone body produced by the liver upon starvation, it inhibits N-type calcium channels and modulates the activity of sympathetic neurons through a signaling cascade involving the beta and gamma subunits of its coupled G protein, phospholipase C and MAP kinases. Thereby, it may regulate energy expenditure through the control of the sympathetic nervous system that controls for instance heart rate. Upon activation by SCFAs accumulating in the intestine, it may also signal to the brain via neural circuits which in turn would regulate intestinal gluconeogenesis. May also control the production of hormones involved in whole-body energy homeostasis. May for instance, regulate blood pressure through renin secretion. May also regulate secretion of the PYY peptide by enteroendocrine cells and control gut motility, intestinal transit rate, and the harvesting of energy from SCFAs produced by gut microbiota. May also indirectly regulate the production of LEP/Leptin, a hormone acting on the CNS to inhibit food intake, in response to the presence of short-chain fatty acids in the intestine. Finally, may also play a role in glucose homeostasis. Besides its role in energy homeostasis, may play a role in intestinal immunity. May mediate the activation of the inflammatory and immune response by SCFAs in the gut, regulating the rapid production of chemokines and cytokines by intestinal epithelial cells. This chain is Free fatty acid receptor 3 (Ffar3), found in Rattus norvegicus (Rat).